A 97-amino-acid polypeptide reads, in one-letter code: C-C motif chemokine 7 (97 aa).

The N-terminal stretch at methionine 1–alanine 23 is a signal peptide. Position 24 is a pyrrolidone carboxylic acid (glutamine 24). The N-linked (GlcNAc...) asparagine glycan is linked to asparagine 29. 2 cysteine pairs are disulfide-bonded: cysteine 33–cysteine 57 and cysteine 34–cysteine 73.

This sequence belongs to the intercrine beta (chemokine CC) family. In terms of assembly, monomer. Interacts with TNFAIP6 (via Link domain).

The protein localises to the secreted. Chemotactic factor that attracts monocytes and eosinophils, but not neutrophils. Augments monocyte anti-tumor activity. The polypeptide is C-C motif chemokine 7 (Ccl7) (Rattus norvegicus (Rat)).